Consider the following 348-residue polypeptide: Short-wave-sensitive opsin 1 (348 aa).

The Extracellular portion of the chain corresponds to 1–33 (MRKMSEEEFYLFKNISSVGPWDGPQYHIAPVWA). Asparagine 14 carries N-linked (GlcNAc...) asparagine glycosylation. A helical transmembrane segment spans residues 34-58 (FYLQAAFMGTVFLIGFPLNAMVLVA). The Cytoplasmic portion of the chain corresponds to 59–70 (TLRYKKLRQPLN). The chain crosses the membrane as a helical span at residues 71–96 (YILVNVSFGGFLLCIFSVFPVFVASC). Topologically, residues 97–110 (NGYFVFGRHVCALE) are extracellular. An intrachain disulfide couples cysteine 107 to cysteine 184. Residues 111 to 130 (GFLGTVAGLVTGWSLAFLAF) traverse the membrane as a helical segment. Over 131–149 (ERYIVICKPFGNFRFSSKH) the chain is Cytoplasmic. The helical transmembrane segment at 150-173 (ALTVVLATWTIGIGVSIPPFFGWS) threads the bilayer. The Extracellular segment spans residues 174–199 (RFIPEGLQCSCGPDWYTVGTKYRSES). Residues 200 to 227 (YTWFLFIFCFIVPLSLICFSYTQLLRAL) form a helical membrane-spanning segment. Residues 228–249 (KAVAAQQQESATTQKAEREVSR) are Cytoplasmic-facing. The chain crosses the membrane as a helical span at residues 250-273 (MVVVMVGSFCVCYVPYAAFAMYMV). Topologically, residues 274 to 281 (NNRNHGLD) are extracellular. The helical transmembrane segment at 282-306 (LRLVTIPSFFSKSACIYNPIIYCFM) threads the bilayer. Position 293 is an N6-(retinylidene)lysine (lysine 293). The Cytoplasmic segment spans residues 307-348 (NKQFQACIMKMVCGKAMTDESDTCSSQKTEVSTVSSTQVGPN).

This sequence belongs to the G-protein coupled receptor 1 family. Opsin subfamily. In terms of processing, phosphorylated on some or all of the serine and threonine residues present in the C-terminal region.

It localises to the cell membrane. The protein localises to the photoreceptor inner segment. Its subcellular location is the cell projection. It is found in the cilium. The protein resides in the photoreceptor outer segment. It localises to the cytoplasm. The protein localises to the perinuclear region. Functionally, visual pigments are the light-absorbing molecules that mediate vision. They consist of an apoprotein, opsin, covalently linked to cis-retinal. Required for the maintenance of cone outer segment organization in the ventral retina, but not essential for the maintenance of functioning cone photoreceptors. Involved in ensuring correct abundance and localization of retinal membrane proteins. May increase spectral sensitivity in dim light. The polypeptide is Short-wave-sensitive opsin 1 (OPN1SW) (Pan paniscus (Pygmy chimpanzee)).